Reading from the N-terminus, the 590-residue chain is MGSTEQTTEILLCLSPVEVANLKEGINFFRNKSTGKDYILYKSKSRLRACKNVCKHQGGLFIKDIEDLAGRSVRCTKHNWKLDVSTMKYINPPESFCQDELVVEMDENNGLLLLELNPPNPWDSEPRSPEELDFGEVQITYLTHACMDLKLGDKRMVFDPWLIGPAFARGWWLLHEPPSDWLERLCQADLIYISHLHSDHLSYPTLKKLAGRRPDIPIYVGNTERPVFWNLNQSGVQLTNINVVPFGIWQQVDKNLRFMILMDGVHPEMDTCIIVEYKGHKILNTVDCTRPNGGRLPTKVALMMSDFAGGASGFPMTFSGGKFTEEWKAQFIKTERKKLLNYKAQLVKNLQPRIYCPFAGYFVESHPSDKYIKETNTKNDPNELNNLIKKNSDVITWTPRPGATLDLGRMLKDPTDSKGIIEPPEGTKIYKDSWDFEPYLEILNAAVGDEIFLHSSWIKEYFTWAGFKDYNLVVRMIETDEDFNPFPGGYDYLVDFLDLSFPKERPQREHPYEEIRSRVDVIRHVVKNGLLWDELYIGFQTRLQRDPDIYHHLFWNHFQIKLPLTPPNWRSFLTCCEQNGPGISQECKTT.

The region spanning 14–112 (LSPVEVANLK…VEMDENNGLL (99 aa)) is the Rieske domain. [2Fe-2S] cluster contacts are provided by Cys-54, His-56, Cys-75, and His-78.

This sequence belongs to the CMP-Neu5Ac hydroxylase family. The cofactor is [2Fe-2S] cluster.

Its subcellular location is the cytoplasm. The catalysed reaction is CMP-N-acetyl-beta-neuraminate + 2 Fe(II)-[cytochrome b5] + O2 + 2 H(+) = CMP-N-glycoloyl-beta-neuraminate + 2 Fe(III)-[cytochrome b5] + H2O. Its pathway is amino-sugar metabolism; N-acetylneuraminate metabolism. In terms of biological role, sialic acids are components of carbohydrate chains of glycoconjugates and are involved in cell-cell recognition and cell-pathogen interactions. Catalyzes the conversion of CMP-N-acetylneuraminic acid (CMP-Neu5Ac) into its hydroxylated derivative CMP-N-glycolylneuraminic acid (CMP-Neu5Gc), a sialic acid abundantly expressed at the surface of many cells. This chain is Cytidine monophosphate-N-acetylneuraminic acid hydroxylase (CMAH), found in Macaca mulatta (Rhesus macaque).